The following is a 287-amino-acid chain: MKLVIVSGRSGSGKSVALRVLEDLGYYCVDNLPLPLIGTLLAQLKGSNDLVAISVDVRNIAEQGKVLQDQLALLENDTEIISFFLNSNDKVLLKRYSETRRLHPLSKNHISLQEAIKLEGRLLEPIAKIVDHYIDTSALNIYELSDQVRQILLGSVDKELVINFESFGFKHGMPTEADFMFDVRFLPNPHWEIELRPFTGLDEPVQEFLGRQPLVNKFIWQIENLFETWMPHLERNNRSYLTIAIGCTGGQHRSVYIADQLAKRFRQGSKHTVNARHRELNISDTNN.

8–15 (GRSGSGKS) provides a ligand contact to ATP. GTP is bound at residue 56 to 59 (DVRN).

It belongs to the RapZ-like family.

Its function is as follows. Displays ATPase and GTPase activities. This Shewanella frigidimarina (strain NCIMB 400) protein is Nucleotide-binding protein Sfri_3380.